Reading from the N-terminus, the 1663-residue chain is TPR repeat-containing protein DDB_G0287407 (1663 aa).

Disordered regions lie at residues 84–109 (RKTQPTSSNGSTSTTTTTTTTTQKGQ) and 326–359 (SEYSSTNDDGENDQSDDDDDNEDDDDFVEKNSNQ). Residues 89–105 (TSSNGSTSTTTTTTTTT) show a composition bias toward low complexity. Over residues 333–352 (DDGENDQSDDDDDNEDDDDF) the composition is skewed to acidic residues. 6 TPR repeats span residues 1110 to 1143 (SDVWFRVASFLEELSQFDGAEVLYNKCRELYINN), 1150 to 1183 (AKVDRAMGRMYLTMGQNDKSDSKFRLALSIYTKE), 1192 to 1225 (AITLNLLGTLATNRCKFDEAKQILNQAMNICESK), 1234 to 1269 (ADIAYSLGSVCFVEPNRKLEVAEAYFARSLELTESK), 1278 to 1311 (ARILTRLGSLNIEKDTYADAEAFFKAALKIYEAR), and 1320 to 1353 (SQILRHMISLYEVQENYKMAEQCCIRALAITKKI). Disordered regions lie at residues 1500–1528 (VAQPTSFNSPVQPPSPRTQQAIQQGQQQR) and 1544–1571 (QKVSSLQQQPQQQQQQQPSQGYGNRQNT). Residues 1516 to 1547 (RTQQAIQQGQQQRQQVQQQQQQVQQQMSQKVS) are a coiled coil. Composition is skewed to low complexity over residues 1518–1528 (QQAIQQGQQQR) and 1544–1563 (QKVSSLQQQPQQQQQQQPSQ).

This is TPR repeat-containing protein DDB_G0287407 from Dictyostelium discoideum (Social amoeba).